The sequence spans 276 residues: RNA-binding protein pno-1 (276 aa).

Disordered stretches follow at residues 1-30 and 62-101; these read MATS…VPST and DVVM…SRVV. The span at 8 to 27 shows a compositional bias: acidic residues; it reads FDDEFPMEEGMPELLDDEDV. The KH domain occupies 197–249; it reads GDHVSRAIGRIAGKDGRTKLVIENTTKTRIVVANTKIHILGAYQNLKLARNAV.

It belongs to the PNO1 family. Part of the small subunit (SSU) processome, composed of more than 70 proteins and the RNA chaperone small nucleolar RNA (snoRNA) U3.

It localises to the nucleus. The protein localises to the nucleolus. Functionally, part of the small subunit (SSU) processome, first precursor of the small eukaryotic ribosomal subunit. During the assembly of the SSU processome in the nucleolus, many ribosome biogenesis factors, an RNA chaperone and ribosomal proteins associate with the nascent pre-rRNA and work in concert to generate RNA folding, modifications, rearrangements and cleavage as well as targeted degradation of pre-ribosomal RNA by the RNA exosome. Positively regulates dimethylation of two adjacent adenosines in the loop of a conserved hairpin near the 3'-end of 18S rRNA. In Caenorhabditis briggsae, this protein is RNA-binding protein pno-1.